A 366-amino-acid polypeptide reads, in one-letter code: Alanine racemase (366 aa).

Residue lysine 40 is the Proton acceptor; specific for D-alanine of the active site. Lysine 40 carries the N6-(pyridoxal phosphate)lysine modification. Substrate is bound at residue arginine 136. The Proton acceptor; specific for L-alanine role is filled by tyrosine 263. Substrate is bound at residue methionine 310.

This sequence belongs to the alanine racemase family. It depends on pyridoxal 5'-phosphate as a cofactor.

The catalysed reaction is L-alanine = D-alanine. It participates in amino-acid biosynthesis; D-alanine biosynthesis; D-alanine from L-alanine: step 1/1. Its function is as follows. Catalyzes the interconversion of L-alanine and D-alanine. May also act on other amino acids. The chain is Alanine racemase (alr) from Streptococcus pyogenes serotype M12 (strain MGAS2096).